The chain runs to 971 residues: MIFIMTDAHAQSAQNIATTYDPTDIERKWYQIWEEKGYFKPSGQGDSFCIMIPPPNVTGSLHMGHGFNNAIMDALTRYNRMMGKNTLWQPGTDHAGIATQMVVERQLAAQNISRHDLGREQFIDKVWEWKEQSGGTITKQIRRLGSSVDWSRERFTMDDGLSNAVKEVFVKLHEDGLIYRGKRLVNWDPKLQTALSDLEVESVEEKGSLWHFKYFFEDKSLKTQDGHDFLVVATTRPETLLGDTAVAVHPEDERYAHLIGKNIVLPITGRLVPIVADEYVEKDFGTGCVKITPAHDFNDYDLGKRHDLPIINIFNKNAEVLAEFEYIAKAGEQISDAIAAPADYVGLERFAARKKLVAQAEAEGWLDQIQPYDLKAPRGDRSGVIVEPLLTDQWYVKIAPLAQPAIEAVQDGRIKFVPEQYTNMYMAWMNNIQDWCISRQLWWGHRIPAWYDAEGNVYVGRNEEEVRAKNNLAADLALQQDEDVLDTWFSSGLWTFSTLGWTGDAKKDAENYFLNTFHPTDVLVTGFDIIFFWVARMIMMTMHFMKNEDGTPQVPFKTVYVHGLVRDGEGQKMSKSKGNVLDPLDLIDGIDLESLVQKRTFGLMNPKQAEKIEKATRKEFPEGINSYGTDAVRFTFCALANTGRDIKFDLKRVEGYRNFCNKIWNATRFVLMNVEGQTVAQEARPELWELPEQWIMSRLQKAEQAVHQAFATYRLDLAAQTIYDFIWNEYCDWYVELTKPVLNDAEVSEERKAEVRRVLLAVMEASLRLAHPLMPYLTEEIWQTLAPMIGKGGDTIMTAKYPVPEAAKMNEQAEADMQWLQGLIGAVRNIRGEMGLGNARLLPVLLQNISDSERTQIERIQPLFKALAKVESITFLAQGEEPPLSSSSVVGHASVFVPMKGLIDPKAELGRLQKDLDKVQKQHDQIASKLANEGFVAKAPAAVVEGEKVKLAEFADQLVKIKQSMEQIAAL.

A 'HIGH' region motif is present at residues 55–65 (PNVTGSLHMGH). Residues 572–576 (KMSKS) carry the 'KMSKS' region motif. An ATP-binding site is contributed by K575. Positions 906-933 (KAELGRLQKDLDKVQKQHDQIASKLANE) form a coiled coil.

It belongs to the class-I aminoacyl-tRNA synthetase family. ValS type 1 subfamily. Monomer.

The protein localises to the cytoplasm. The enzyme catalyses tRNA(Val) + L-valine + ATP = L-valyl-tRNA(Val) + AMP + diphosphate. Functionally, catalyzes the attachment of valine to tRNA(Val). As ValRS can inadvertently accommodate and process structurally similar amino acids such as threonine, to avoid such errors, it has a 'posttransfer' editing activity that hydrolyzes mischarged Thr-tRNA(Val) in a tRNA-dependent manner. The chain is Valine--tRNA ligase from Acinetobacter baylyi (strain ATCC 33305 / BD413 / ADP1).